Consider the following 232-residue polypeptide: Adenosylcobinamide-GDP ribazoletransferase (232 aa).

Helical transmembrane passes span 32-52 (PIYF…GGSF), 54-74 (NFLL…LFHF), 102-122 (VGPF…TLYL), 126-146 (PITF…LMFF), 172-192 (FFLL…VVTV), and 212-232 (DVLG…LGVV).

Belongs to the CobS family. It depends on Mg(2+) as a cofactor.

The protein resides in the cell inner membrane. It catalyses the reaction alpha-ribazole + adenosylcob(III)inamide-GDP = adenosylcob(III)alamin + GMP + H(+). It carries out the reaction alpha-ribazole 5'-phosphate + adenosylcob(III)inamide-GDP = adenosylcob(III)alamin 5'-phosphate + GMP + H(+). The protein operates within cofactor biosynthesis; adenosylcobalamin biosynthesis; adenosylcobalamin from cob(II)yrinate a,c-diamide: step 7/7. Joins adenosylcobinamide-GDP and alpha-ribazole to generate adenosylcobalamin (Ado-cobalamin). Also synthesizes adenosylcobalamin 5'-phosphate from adenosylcobinamide-GDP and alpha-ribazole 5'-phosphate. The polypeptide is Adenosylcobinamide-GDP ribazoletransferase (Thermosipho melanesiensis (strain DSM 12029 / CIP 104789 / BI429)).